A 549-amino-acid polypeptide reads, in one-letter code: Probable acyl-activating enzyme 10 (549 aa).

It belongs to the ATP-dependent AMP-binding enzyme family. As to expression, expressed at low levels in roots.

Its function is as follows. May act as an acid--thiol ligase that activates carboxylic acids by forming acyl-CoAs. This is Probable acyl-activating enzyme 10 (AEE10) from Arabidopsis thaliana (Mouse-ear cress).